Consider the following 285-residue polypeptide: ATP synthase gamma chain (285 aa).

This sequence belongs to the ATPase gamma chain family. As to quaternary structure, F-type ATPases have 2 components, CF(1) - the catalytic core - and CF(0) - the membrane proton channel. CF(1) has five subunits: alpha(3), beta(3), gamma(1), delta(1), epsilon(1). CF(0) has three main subunits: a, b and c.

It localises to the cell membrane. Its function is as follows. Produces ATP from ADP in the presence of a proton gradient across the membrane. The gamma chain is believed to be important in regulating ATPase activity and the flow of protons through the CF(0) complex. The sequence is that of ATP synthase gamma chain from Dehalococcoides mccartyi (strain CBDB1).